The following is a 1311-amino-acid chain: Protein PARALOG OF AIPP2 (1311 aa).

Disordered stretches follow at residues 1–21, 114–141, and 178–280; these read MADR…KVES, ISDD…VSAS, and GNKD…EMVE. The span at 213–240 shows a compositional bias: basic and acidic residues; the sequence is NHDDRVSSEKGNFKEKSRPGGNKERQEP. Residues 258 to 270 show a composition bias toward low complexity; it reads SKSSSSNSSAVSE. Residues 283–334 form a PHD-type zinc finger; that stretch reads VKVCDICGDAGREDLLAICSGCSDGAEHTYCMREMLDEVPEGDWLCEECAEE. Zn(2+) is bound by residues Cys286, Cys289, Cys301, Cys304, His310, Cys313, Cys328, and Cys331. The stretch at 328 to 348 forms a coiled coil; the sequence is CEECAEEAEKQKQEAKRKRET. Disordered stretches follow at residues 369–390, 411–440, 460–701, 975–1050, 1059–1078, 1087–1138, 1152–1186, and 1249–1311; these read PDAK…ILPR, NHQT…FLKS, HPRQ…EDLN, TNPQ…PSKK, EAGV…GDSL, EQEL…NPAN, NDGL…GIMK, and LSRS…DLPR. A compositionally biased stretch (polar residues) spans 411-431; it reads NHQTSFSDDTESARSAGSQLQ. Residues 460 to 472 are compositionally biased toward basic and acidic residues; the sequence is HPRQKTGKEDTAL. Residues 487–502 show a composition bias toward polar residues; the sequence is PSRTTDAGNSGGSDSQ. Residues 512–528 are compositionally biased toward basic and acidic residues; that stretch reads HSQEGKSLKQVKDRNRE. Over residues 529 to 552 the composition is skewed to polar residues; sequence ANASASSIDQKLKSRGNSSVSHAN. Residues 553–566 are compositionally biased toward basic and acidic residues; it reads NNRDLKGLQSDGKR. Residues 569–607 are compositionally biased toward polar residues; the sequence is LTKQVSNLSRNRLENSVVSGGDISTNEKCSASEQSSSQA. A compositionally biased stretch (basic and acidic residues) spans 640–653; that stretch reads VPREVGKKSKEAFS. 3 stretches are compositionally biased toward polar residues: residues 668–694, 977–988, and 1014–1025; these read PSSQ…STTK, PQKNTSLPTSNV, and LRESSSNGIETR. A compositionally biased stretch (basic and acidic residues) spans 1026–1050; it reads NGTDARSHENPNNRESSIERSPSKK. Positions 1087–1096 are enriched in basic and acidic residues; that stretch reads EQELGGRKDL. A compositionally biased stretch (polar residues) spans 1250–1263; sequence SRSSNSGEQSNNSM. Positions 1256–1276 form a coiled coil; it reads GEQSNNSMNKEKQKADEEEED. Residues 1280-1289 are compositionally biased toward low complexity; that stretch reads VAASLSLSLS.

Part of the BAH-PHD bivalent histone reader complex that contains AIPP2, PAIPP2 and AIPP3/BDT1; the BAH-PHD module associates with CPL2 to form the BAH-PHD-CPL2 complex (BPC) for transcriptional repression. Binds directly to AIPP3/BDT1 and CPL2, but not to AIPP2. Expressed ubiquitously.

Functionally, together with AIPP2 and AIPP3/BDT1, cooperates to form a BAH-PHD bivalent histone reader complex able to read histone H3 lysine 27 trimethylation (H3K27me3) and low-methylated H3K4 histone marks in order to regulate transcription, especially to prevent early flowering; promotes AIPP3/BDT1 binding to H3K27me3. CPL2 is subsequently recruited to form a BAH-PHD-CPL2 complex (BPC) in order to silence several H3K27me3 and low-methylated H3K4 enriched loci, including AGO5, via the phosphorylation state-dependent inhibition of Pol II release from the transcriptional start site (e.g. Ser5P-Pol II dephosphorylation). The BPC complex represses flowering by inhibiting the expression of several genes, including AGL6, FT, FUL and SOC1. The sequence is that of Protein PARALOG OF AIPP2 from Arabidopsis thaliana (Mouse-ear cress).